The sequence spans 514 residues: Sugar transport protein 3 (514 aa).

The Cytoplasmic segment spans residues 1–19; that stretch reads MVAEEARKEAMAKSVSGGK. 12 consecutive transmembrane segments (helical) span residues 20–40, 87–107, 124–144, 147–167, 174–194, 207–227, 289–309, 327–347, 356–376, 392–412, 430–450, and 456–476; these read ITYF…IFGY, LLTS…LLAS, VSFL…MLII, LLLG…LSEM, GAIS…ANVI, ISLA…LFLP, LVMA…VVAF, MSTL…MLVV, FLIG…IVMV, VVVL…PLGW, VTVA…PPML, and GIFF…QLFL. Over 477 to 514 the chain is Cytoplasmic; it reads PETKNVPIEKVVGLWEKHWFWRRMTSKRDIQETTILSH.

This sequence belongs to the major facilitator superfamily. Sugar transporter (TC 2.A.1.1) family.

The protein localises to the membrane. Mediates an active uptake of hexoses, probably by sugar/hydrogen symport. The chain is Sugar transport protein 3 (STP3) from Arabidopsis thaliana (Mouse-ear cress).